The chain runs to 268 residues: MMQRCLRLQKPLALRRGLHLAQVNSQAVTTEAPEAEPLDAFERQYLKERIEISPFQRLFLGAGSSIAALLNPRRHDMIACLGETTGEDALWTILDTMQASEEGQRIMADKPRIHTSTIDFKYLETLPPDTFGAAYVKFLKDNQVTPDSRMAVRFLEDPKLAYLMTRYRECHDLIHTVLDMPTNMLGEVAVKWVEALNTGLPMCYGGAVFGAVRLRPKQRRAYLKHYLPWALENGKRAKPLMPVYWEKRWEQNIHELRSELGITVLNKA.

Zn(2+) is bound by residues His-171, Asp-172, His-175, and Glu-187.

It belongs to the COQ4 family. As to quaternary structure, component of a multi-subunit COQ enzyme complex. The cofactor is Zn(2+).

It is found in the mitochondrion inner membrane. The enzyme catalyses a 4-hydroxy-3-methoxy-5-(all-trans-polyprenyl)benzoate + H(+) = a 2-methoxy-6-(all-trans-polyprenyl)phenol + CO2. Its pathway is cofactor biosynthesis; ubiquinone biosynthesis. Lyase that catalyzes the C1-decarboxylation of 4-hydroxy-3-methoxy-5-(all-trans-polyprenyl)benzoic acid into 2-methoxy-6-(all-trans-polyprenyl)phenol during ubiquinone biosynthesis. In Drosophila sechellia (Fruit fly), this protein is Ubiquinone biosynthesis protein COQ4 homolog, mitochondrial.